Consider the following 336-residue polypeptide: Glycerol-3-phosphate dehydrogenase [NAD(P)+] (336 aa).

The NADPH site is built by Ser-16, Tyr-17, His-37, and Lys-111. Positions 111, 140, and 142 each coordinate sn-glycerol 3-phosphate. NADPH is bound at residue Ala-144. Positions 196, 249, 259, 260, and 261 each coordinate sn-glycerol 3-phosphate. Lys-196 serves as the catalytic Proton acceptor. An NADPH-binding site is contributed by Arg-260. Val-284 and Glu-286 together coordinate NADPH.

It belongs to the NAD-dependent glycerol-3-phosphate dehydrogenase family.

It is found in the cytoplasm. The catalysed reaction is sn-glycerol 3-phosphate + NAD(+) = dihydroxyacetone phosphate + NADH + H(+). The enzyme catalyses sn-glycerol 3-phosphate + NADP(+) = dihydroxyacetone phosphate + NADPH + H(+). It functions in the pathway membrane lipid metabolism; glycerophospholipid metabolism. In terms of biological role, catalyzes the reduction of the glycolytic intermediate dihydroxyacetone phosphate (DHAP) to sn-glycerol 3-phosphate (G3P), the key precursor for phospholipid synthesis. The sequence is that of Glycerol-3-phosphate dehydrogenase [NAD(P)+] from Glaesserella parasuis serovar 5 (strain SH0165) (Haemophilus parasuis).